Here is a 1806-residue protein sequence, read N- to C-terminus: Collagen alpha-1(XI) chain (1806 aa).

A signal peptide spans 1 to 35 (MEPWSSRWKTKRWLWDFTVTTLALTFLFQAREVRG). Residues 36-511 (AAPVDVLKAL…DGSKGPTISA (476 aa)) constitute a propeptide, N-terminal propeptide. 2 cysteine pairs are disulfide-bonded: cysteine 61–cysteine 243 and cysteine 182–cysteine 236. The region spanning 71–243 (DTAYRVSKQA…DYCEHYSPDC (173 aa)) is the Laminin G-like domain. The tract at residues 230 to 419 (KAAYDYCEHY…DITETSINGH (190 aa)) is nonhelical region. A triple-helical region (interrupted) region spans residues 420-508 (GAYGEKGQKG…YGGDGSKGPT (89 aa)). The interval 439–508 (LVEGPPGPAG…YGGDGSKGPT (70 aa)) is disordered. One can recognise a Collagen-like 1 domain in the interval 442–490 (GPPGPAGPAGIMGPPGLQGPTGPPGDPGDRGPPGRPGLPGADGLPGPPG). Low complexity-rich tracts occupy residues 449-461 (PAGI…LQGP) and 479-496 (LPGA…LMLP). The segment at 509-511 (ISA) is short nonhelical segment. Residues 512 to 528 (QEAQAQAILQQARIALR) form a telopeptide region. The segment at 528 to 1563 (RGPPGPMGLT…TRRHTEGMQA (1036 aa)) is disordered. Positions 529–1542 (GPPGPMGLTG…PGSPGPPGEV (1014 aa)) are triple-helical region. Collagen-like domains lie at 532 to 586 (GPMG…GADG), 583 to 641 (GADG…EIGP), 616 to 674 (GERG…VDGP), and 643 to 699 (GLPG…PGPQ). Composition is skewed to gly residues over residues 541–550 (GPVGGPGSSG) and 583–592 (GADGGRGMPG). An Allysine modification is found at lysine 612. Low complexity predominate over residues 641–662 (PRGLPGEAGPRGLLGPRGTPGA). The span at 699 to 710 (QGLPGPQGPIGP) shows a compositional bias: pro residues. The span at 717–728 (QGKPGLAGLPGA) shows a compositional bias: low complexity. Residues 807–816 (RGEDGPEGPK) show a composition bias toward basic and acidic residues. Low complexity-rich tracts occupy residues 875-903 (KPGP…PGPK), 918-927 (RGPQGPQGPV), 941-960 (KDGL…QGKT), 971-981 (PQGPTGETGPI), 1032-1041 (RGLPGAQGAP), and 1058-1074 (SPGE…IGLP). Residues 1076–1085 (RPGPQGPPGP) show a composition bias toward pro residues. The span at 1086-1110 (AGEKGAPGEKGPQGPAGRDGVQGPV) shows a compositional bias: low complexity. A compositionally biased stretch (gly residues) spans 1162–1171 (GIAGGDGEPG). Composition is skewed to pro residues over residues 1218–1229 (MGPPGPPGPRGP) and 1343–1362 (QPGP…PGKR). 2 stretches are compositionally biased toward low complexity: residues 1385–1394 (AEGPPGKTGP) and 1419–1428 (QGLPGAAGQD). Collagen-like domains lie at 1393–1450 (GPVG…GSKG), 1429–1487 (GPPG…AKGD), and 1483–1541 (GAKG…PPGE). The span at 1430 to 1439 (PPGPMGPPGL) shows a compositional bias: pro residues. An Allysine modification is found at lysine 1452. Residues 1455-1464 (PGLIGLIGPP) are compositionally biased toward low complexity. Gly residues predominate over residues 1483–1492 (GAKGDGGIPG). Composition is skewed to pro residues over residues 1493–1509 (PAGP…PGPQ) and 1530–1539 (PGPPGSPGPP). The interval 1543–1563 (IQPLPILSSKKTRRHTEGMQA) is nonhelical region (C-terminal). A propeptide spans 1564 to 1806 (DADDNILDYS…FEVGPVCFLG (243 aa)) (C-terminal propeptide). One can recognise a Fibrillar collagen NC1 domain in the interval 1577 to 1805 (EEIFGSLNSL…GFEVGPVCFL (229 aa)). Cysteine 1607 and cysteine 1639 are oxidised to a cystine. Aspartate 1625, asparagine 1627, glutamine 1628, cysteine 1630, and aspartate 1633 together coordinate Ca(2+). Asparagine 1640 is a glycosylation site (N-linked (GlcNAc...) asparagine). 2 disulfides stabilise this stretch: cysteine 1648–cysteine 1803 and cysteine 1714–cysteine 1757.

Belongs to the fibrillar collagen family. In terms of assembly, trimers composed of three different chains: alpha 1(XI), alpha 2(XI), and alpha 3(XI). Alpha 3(XI) is a post-translational modification of alpha 1(II). Alpha 1(V) can also be found instead of alpha 3(XI)=1(II). Prolines at the third position of the tripeptide repeating unit (G-X-Y) are hydroxylated in some or all of the chains. Post-translationally, N-glycosylated. In terms of tissue distribution, cartilage, placenta and some tumor or virally transformed cell lines. Isoforms using exon IIA or IIB are found in the cartilage while isoforms using only exon IIB are found in the tendon.

Its subcellular location is the secreted. It localises to the extracellular space. It is found in the extracellular matrix. May play an important role in fibrillogenesis by controlling lateral growth of collagen II fibrils. The chain is Collagen alpha-1(XI) chain (COL11A1) from Homo sapiens (Human).